The following is a 507-amino-acid chain: MAMASLARRKAYFLTRNLSNSPTDALRFSFSLSRGFASSGSDENDVVIIGGGPGGYVAAIKASQLGLKTTCIEKRGALGGTCLNVGCIPSKALLHSSHMYHEAKHSFANHGIKVSSVEVDLPAMLAQKDNAVKNLTRGIEGLFKKNKVTYVKGYGKFISPNEVSVETIDGGNTIVKGKHIIVATGSDVKSLPGITIDEKKIVSSTGALSLSEVPKKLIVIGAGYIGLEMGSVWGRLGSEVTVVEFAGDIVPSMDGEIRKQFQRSLEKQKMKFMLKTKVVSVDSSSDGVKLTVEPAEGGEQSILEADVVLVSAGRTPFTSGLDLEKIGVETDKAGRILVNDRFLSNVPGVYAIGDVIPGPMLAHKAEEDGVACVEFIAGKHGHVDYDKVPGVVYTHPEVASVGKTEEQLKKEGVSYRVGKFPFMANSRAKAIDNAEGLVKILADKETDKILGVHIMAPNAGELIHEAVLAINYDASSEDIARVCHAHPTMSEALKEAAMATYDKPIHI.

The transit peptide at 1-36 directs the protein to the mitochondrion; the sequence is MAMASLARRKAYFLTRNLSNSPTDALRFSFSLSRGF. FAD-binding positions include 73–82, K91, G155, and 184–186; these read EKRGALGGTC and TGS. The cysteines at positions 82 and 87 are disulfide-linked. Residues 221 to 228, E244, V278, and G313 each bind NAD(+); that span reads GAGYIGLE. FAD contacts are provided by residues D354 and 360–363; that span reads MLAH. The active-site Proton acceptor is H486.

The protein belongs to the class-I pyridine nucleotide-disulfide oxidoreductase family. As to quaternary structure, homodimer. Part of both the glycine cleavage system composed of four proteins: P, T, L and H and of the pyruvate dehydrogenase complex containing multiple copies of three enzymatic components: pyruvate dehydrogenase (E1), dihydrolipoamide acetyltransferase (E2) and lipoamide dehydrogenase (E3). The cofactor is FAD. S-nytrosylated at unknown positions. Preferentially expressed in leaves, flowers and siliques and at a lower level in roots and stems.

It localises to the mitochondrion matrix. The enzyme catalyses N(6)-[(R)-dihydrolipoyl]-L-lysyl-[protein] + NAD(+) = N(6)-[(R)-lipoyl]-L-lysyl-[protein] + NADH + H(+). In terms of biological role, lipoamide dehydrogenase is a component of the glycine decarboxylase (GDC) or glycine cleavage system as well as of the alpha-ketoacid dehydrogenase complexes. LPD1 is probably the protein most often associated with the glycine decarboxylase complex while LPD2 is probably incorporated into alpha-ketoacid dehydrogenase complexes. The protein is Dihydrolipoyl dehydrogenase 1, mitochondrial (LPD1) of Arabidopsis thaliana (Mouse-ear cress).